The sequence spans 93 residues: Small ribosomal subunit protein uS19 (93 aa).

It belongs to the universal ribosomal protein uS19 family.

Protein S19 forms a complex with S13 that binds strongly to the 16S ribosomal RNA. The chain is Small ribosomal subunit protein uS19 from Agathobacter rectalis (strain ATCC 33656 / DSM 3377 / JCM 17463 / KCTC 5835 / VPI 0990) (Eubacterium rectale).